A 275-amino-acid polypeptide reads, in one-letter code: tRNA pseudouridine synthase B (275 aa).

Aspartate 38 (nucleophile) is an active-site residue.

Belongs to the pseudouridine synthase TruB family. Type 1 subfamily.

The catalysed reaction is uridine(55) in tRNA = pseudouridine(55) in tRNA. Functionally, responsible for synthesis of pseudouridine from uracil-55 in the psi GC loop of transfer RNAs. This Nitratiruptor sp. (strain SB155-2) protein is tRNA pseudouridine synthase B.